Here is a 235-residue protein sequence, read N- to C-terminus: 2-C-methyl-D-erythritol 4-phosphate cytidylyltransferase (235 aa).

This sequence belongs to the IspD/TarI cytidylyltransferase family. IspD subfamily.

It carries out the reaction 2-C-methyl-D-erythritol 4-phosphate + CTP + H(+) = 4-CDP-2-C-methyl-D-erythritol + diphosphate. It functions in the pathway isoprenoid biosynthesis; isopentenyl diphosphate biosynthesis via DXP pathway; isopentenyl diphosphate from 1-deoxy-D-xylulose 5-phosphate: step 2/6. Functionally, catalyzes the formation of 4-diphosphocytidyl-2-C-methyl-D-erythritol from CTP and 2-C-methyl-D-erythritol 4-phosphate (MEP). This Leptospira borgpetersenii serovar Hardjo-bovis (strain L550) protein is 2-C-methyl-D-erythritol 4-phosphate cytidylyltransferase.